Here is a 128-residue protein sequence, read N- to C-terminus: Cyclic ether formation enzyme gkaZ (128 aa).

Positions 1 to 36 (MTTARALSDGLAYLLACFNAFCIQAHLTSRFSPAFS) are cleaved as a signal peptide. 2 helical membrane-spanning segments follow: residues 61–81 (LRYM…LPGW) and 107–127 (WLLH…AIYV).

Belongs to the cyclic ether formation enzyme xenC family.

The protein localises to the membrane. The protein operates within mycotoxin biosynthesis. In terms of biological role, cyclic ether formation enzyme; part of the gene cluster that mediates the biosynthesis of GKK1032, fungal natural products containing a macrocyclic para-cyclophane connected to a decahydrofluorene ring system that show potent antitumor activities. Within the pathway, gkaZ functions synergistically with gkaB and gkaX to form the cyclophane. The pathway begins with the PKS-NRPS gkaA which, with the help of the trans-enoyl reductase gkaC, synthesizes the polyketide-tyrosyl acyl thioester product which can be reductively off-loaded by the terminal reductase (R) domain in gkaA. The alpha/beta hydrolase gkaG is then required to catalyze the subsequent Knoevenagel condensation that affords the 3-pyrrolin-2-one ring, whereas the three proteins gkaB, gkaX and gkaZ then function synergistically to form the cyclophane. The sequence is that of Cyclic ether formation enzyme gkaZ from Penicillium citrinum.